The primary structure comprises 453 residues: Malate dehydrogenase [NADP], chloroplastic (453 aa).

The transit peptide at 1–68 (MAVVKLSPWA…RLSSPASIRC (68 aa)) directs the protein to the chloroplast. Cysteines 88 and 93 form a disulfide. 117–123 (GAAGMIS) contacts NADP(+). Residues R198 and R204 each contribute to the substrate site. Residues N211, Q218, and 235–237 (VGN) each bind NADP(+). Residues N237 and R268 each coordinate substrate. H293 acts as the Proton acceptor in catalysis. The cysteines at positions 429 and 441 are disulfide-linked.

Belongs to the LDH/MDH superfamily. MDH type 2 family. As to quaternary structure, homodimer.

The protein localises to the plastid. Its subcellular location is the chloroplast. The catalysed reaction is (S)-malate + NADP(+) = oxaloacetate + NADPH + H(+). Its activity is regulated as follows. Chloroplast NADP-MDH is activated upon illumination. In order to be enzymatically active, disulfide bridges on the protein must be reduced by thioredoxin which receives electrons from ferredoxin and the electron transport system of photosynthesis. The chloroplastic, NADP-dependent form is essential for the photosynthesis C4 cycle, which allows plants to circumvent the problem of photorespiration. In C4 plants, NADP-MDH activity acts to convert oxaloacetate to malate in chloroplasts of mesophyll cells for transport to the bundle sheath cells. This is Malate dehydrogenase [NADP], chloroplastic from Flaveria bidentis (Coastal plain yellowtops).